A 356-amino-acid chain; its full sequence is S-adenosylmethionine:tRNA ribosyltransferase-isomerase (356 aa).

Belongs to the QueA family. In terms of assembly, monomer.

Its subcellular location is the cytoplasm. It carries out the reaction 7-aminomethyl-7-carbaguanosine(34) in tRNA + S-adenosyl-L-methionine = epoxyqueuosine(34) in tRNA + adenine + L-methionine + 2 H(+). The protein operates within tRNA modification; tRNA-queuosine biosynthesis. Functionally, transfers and isomerizes the ribose moiety from AdoMet to the 7-aminomethyl group of 7-deazaguanine (preQ1-tRNA) to give epoxyqueuosine (oQ-tRNA). In Escherichia fergusonii (strain ATCC 35469 / DSM 13698 / CCUG 18766 / IAM 14443 / JCM 21226 / LMG 7866 / NBRC 102419 / NCTC 12128 / CDC 0568-73), this protein is S-adenosylmethionine:tRNA ribosyltransferase-isomerase.